We begin with the raw amino-acid sequence, 280 residues long: Urease accessory protein UreD (280 aa).

Belongs to the UreD family. In terms of assembly, ureD, UreF and UreG form a complex that acts as a GTP-hydrolysis-dependent molecular chaperone, activating the urease apoprotein by helping to assemble the nickel containing metallocenter of UreC. The UreE protein probably delivers the nickel.

Its subcellular location is the cytoplasm. Functionally, required for maturation of urease via the functional incorporation of the urease nickel metallocenter. This is Urease accessory protein UreD from Pseudomonas aeruginosa (strain ATCC 15692 / DSM 22644 / CIP 104116 / JCM 14847 / LMG 12228 / 1C / PRS 101 / PAO1).